We begin with the raw amino-acid sequence, 185 residues long: Ribosome-recycling factor (185 aa).

The protein belongs to the RRF family.

The protein localises to the cytoplasm. Responsible for the release of ribosomes from messenger RNA at the termination of protein biosynthesis. May increase the efficiency of translation by recycling ribosomes from one round of translation to another. This Aeromonas hydrophila subsp. hydrophila (strain ATCC 7966 / DSM 30187 / BCRC 13018 / CCUG 14551 / JCM 1027 / KCTC 2358 / NCIMB 9240 / NCTC 8049) protein is Ribosome-recycling factor.